The chain runs to 237 residues: Phosphoribosylaminoimidazole-succinocarboxamide synthase (237 aa).

The protein belongs to the SAICAR synthetase family.

The catalysed reaction is 5-amino-1-(5-phospho-D-ribosyl)imidazole-4-carboxylate + L-aspartate + ATP = (2S)-2-[5-amino-1-(5-phospho-beta-D-ribosyl)imidazole-4-carboxamido]succinate + ADP + phosphate + 2 H(+). The protein operates within purine metabolism; IMP biosynthesis via de novo pathway; 5-amino-1-(5-phospho-D-ribosyl)imidazole-4-carboxamide from 5-amino-1-(5-phospho-D-ribosyl)imidazole-4-carboxylate: step 1/2. The protein is Phosphoribosylaminoimidazole-succinocarboxamide synthase of Sodalis glossinidius (strain morsitans).